The following is a 222-amino-acid chain: Deoxyribose-phosphate aldolase (222 aa).

Asp89 acts as the Proton donor/acceptor in catalysis. Residue Lys151 is the Schiff-base intermediate with acetaldehyde of the active site. Residue Lys180 is the Proton donor/acceptor of the active site.

This sequence belongs to the DeoC/FbaB aldolase family. DeoC type 1 subfamily.

It localises to the cytoplasm. It carries out the reaction 2-deoxy-D-ribose 5-phosphate = D-glyceraldehyde 3-phosphate + acetaldehyde. It functions in the pathway carbohydrate degradation; 2-deoxy-D-ribose 1-phosphate degradation; D-glyceraldehyde 3-phosphate and acetaldehyde from 2-deoxy-alpha-D-ribose 1-phosphate: step 2/2. Its function is as follows. Catalyzes a reversible aldol reaction between acetaldehyde and D-glyceraldehyde 3-phosphate to generate 2-deoxy-D-ribose 5-phosphate. The polypeptide is Deoxyribose-phosphate aldolase (Acholeplasma laidlawii (strain PG-8A)).